A 435-amino-acid polypeptide reads, in one-letter code: S-phase entry cyclin-5 (435 aa).

2 disordered regions span residues Lys-36–Ser-70 and Asn-104–Ser-126. The segment covering Lys-41 to Asp-52 has biased composition (low complexity). Residues Glu-110–Ala-124 show a composition bias toward acidic residues.

It belongs to the cyclin family. Cyclin AB subfamily.

Its function is as follows. Required for efficient progression through S phase and possibly for the normal progression through meiosis. Interacts with CDC28. The polypeptide is S-phase entry cyclin-5 (CLB5) (Saccharomyces cerevisiae (strain ATCC 204508 / S288c) (Baker's yeast)).